Here is a 138-residue protein sequence, read N- to C-terminus: Endoribonuclease YbeY (138 aa).

Zn(2+) is bound by residues His-98, His-102, and His-108.

It belongs to the endoribonuclease YbeY family. Zn(2+) is required as a cofactor.

It is found in the cytoplasm. Single strand-specific metallo-endoribonuclease involved in late-stage 70S ribosome quality control and in maturation of the 3' terminus of the 16S rRNA. This is Endoribonuclease YbeY from Thermosipho melanesiensis (strain DSM 12029 / CIP 104789 / BI429).